The sequence spans 485 residues: Phenylalanine--tRNA ligase alpha subunit, cytoplasmic (485 aa).

L-phenylalanine-binding positions include Thr-318, 360 to 362, and Tyr-400; that span reads QIE. Glu-402 contributes to the Mg(2+) binding site. Phe-426 provides a ligand contact to L-phenylalanine.

Belongs to the class-II aminoacyl-tRNA synthetase family. Phe-tRNA synthetase alpha subunit type 2 subfamily. As to quaternary structure, tetramer of two alpha and two beta subunits. It depends on Mg(2+) as a cofactor.

It localises to the cytoplasm. It is found in the cytosol. The catalysed reaction is tRNA(Phe) + L-phenylalanine + ATP = L-phenylalanyl-tRNA(Phe) + AMP + diphosphate + H(+). The polypeptide is Phenylalanine--tRNA ligase alpha subunit, cytoplasmic (Arabidopsis thaliana (Mouse-ear cress)).